The chain runs to 228 residues: Eukaryotic translation initiation factor 6 (228 aa).

This sequence belongs to the eIF-6 family. Monomer. Associates with the 60S ribosomal subunit.

The protein resides in the cytoplasm. The protein localises to the nucleus. It localises to the nucleolus. Binds to the 60S ribosomal subunit and prevents its association with the 40S ribosomal subunit to form the 80S initiation complex in the cytoplasm. May also be involved in ribosome biogenesis. The polypeptide is Eukaryotic translation initiation factor 6 (Guillardia theta (Cryptophyte)).